We begin with the raw amino-acid sequence, 365 residues long: uncharacterized protein (365 aa).

The next 6 helical transmembrane spans lie at 3–23, 60–80, 100–120, 141–161, 171–191, and 280–300; these read MDTSKVILIVAIIIWIILYSI, IGIISIPICVILGFFMLLNII, VFLFGDVIPWIPGIIALLIAI, SGILLLLGLPLGAFVELGDEF, AIASAGPLANLIIFLTSIPLL, and TALFINTIYWTYWFNFLLALF.

This sequence to S.solfataricus C04034.

The protein localises to the cell membrane. This is an uncharacterized protein from Methanocaldococcus jannaschii (strain ATCC 43067 / DSM 2661 / JAL-1 / JCM 10045 / NBRC 100440) (Methanococcus jannaschii).